Reading from the N-terminus, the 145-residue chain is uncharacterized protein (145 aa).

The interval 71 to 95 (GARGRGRTYTKGGSSRSPASWAEQG) is disordered.

This is an uncharacterized protein from Homo sapiens (Human).